Reading from the N-terminus, the 149-residue chain is Arginine repressor (149 aa).

Belongs to the ArgR family.

The protein localises to the cytoplasm. It participates in amino-acid biosynthesis; L-arginine biosynthesis [regulation]. Its function is as follows. Regulates arginine biosynthesis genes. This is Arginine repressor from Listeria innocua serovar 6a (strain ATCC BAA-680 / CLIP 11262).